Here is a 467-residue protein sequence, read N- to C-terminus: Cysteine--tRNA ligase (467 aa).

Residue Cys-29 participates in Zn(2+) binding. The short motif at 31 to 41 (ATVQGEPHIGH) is the 'HIGH' region element. Cys-207, His-232, and Glu-236 together coordinate Zn(2+). Positions 263 to 267 (KMSKS) match the 'KMSKS' region motif. Lys-266 serves as a coordination point for ATP. The tract at residues 446 to 467 (IDVTDTPNGPEWSLRTARGKAN) is disordered.

The protein belongs to the class-I aminoacyl-tRNA synthetase family. In terms of assembly, monomer. Requires Zn(2+) as cofactor.

It localises to the cytoplasm. It carries out the reaction tRNA(Cys) + L-cysteine + ATP = L-cysteinyl-tRNA(Cys) + AMP + diphosphate. The chain is Cysteine--tRNA ligase from Nocardia farcinica (strain IFM 10152).